The chain runs to 404 residues: GID complex subunit 9 (404 aa).

One can recognise a LisH domain in the interval 116 to 148 (SRVRLNRLVADYMMANGYHGAAALLCKDSQLEN). One can recognise a CTLH domain in the interval 154-211 (IYKRYQLIHDSILQQELKEVLSWCSEHRAILKKNNSTLELEVRLQRFIELIKSKKLCQ). An RING-Gid-type zinc finger spans residues 317–389 (CPVCTPCLND…REGFLRDPYS (73 aa)).

It belongs to the FYV10 family. Identified in the GID/CTLH complex. In the absence of stress, the complex exists as an inactive anticipatory complex (GID(Ant)), composed of Gid1, the E3 ubiquitin-ligase Gid2, Gid5, Gid8, and the RING-like subunit Gid9, awaiting a substrate receptor to form the active E3 ligase complex. When cells are shifted to glucose-containing medium, the substrate receptor Gid4 is induced and becomes part of the complex, named GID(SR4). Additionally, Gid7 transforms the GID(SR4) E3 ligase core into a higher-order supramolecular assembly (Chelator-GID(SR4)). Under osmotic or heat stress, the substrate receptor Gid10 is induced and becomes part of the complex, named GID(SR10).

It is found in the cytoplasm. Its subcellular location is the nucleus. It carries out the reaction S-ubiquitinyl-[E2 ubiquitin-conjugating enzyme]-L-cysteine + [acceptor protein]-L-lysine = [E2 ubiquitin-conjugating enzyme]-L-cysteine + N(6)-ubiquitinyl-[acceptor protein]-L-lysine.. The protein operates within protein modification; protein ubiquitination. Functionally, component of the GID E3 ligase complex recruiting N termini and catalyzing ubiquitination of proteins targeted for degradation. GID E3 is regulated through assembly with interchangeable N-degron-binding substrate receptors induced by distinct environmental perturbations. Required for the adaptation to the presence of glucose in the growth medium; mediates in association with the substrate receptor VID24/GID4 the degradation of enzymes involved in gluconeogenesis when cells are shifted to glucose-containing medium. The chain is GID complex subunit 9 (gid9) from Schizosaccharomyces pombe (strain 972 / ATCC 24843) (Fission yeast).